The following is a 548-amino-acid chain: Folylpolyglutamate synthase (548 aa).

Residue 130–133 (GKGS) participates in ATP binding. Mg(2+) is bound by residues serine 157, glutamate 234, and histidine 262. 2 residues coordinate ATP: arginine 382 and aspartate 396.

This sequence belongs to the folylpolyglutamate synthase family. Requires a monovalent cation as cofactor.

The protein resides in the mitochondrion inner membrane. It localises to the mitochondrion matrix. Its subcellular location is the cytoplasm. It catalyses the reaction (6S)-5,6,7,8-tetrahydrofolyl-(gamma-L-Glu)(n) + L-glutamate + ATP = (6S)-5,6,7,8-tetrahydrofolyl-(gamma-L-Glu)(n+1) + ADP + phosphate + H(+). It participates in cofactor biosynthesis; tetrahydrofolylpolyglutamate biosynthesis. In terms of biological role, catalyzes conversion of folates to polyglutamate derivatives allowing concentration of folate compounds in the cell and the intracellular retention of these cofactors, which are important substrates for most of the folate-dependent enzymes that are involved in one-carbon transfer reactions involved in purine, pyrimidine and amino acid synthesis. Required for methionine synthesis and maintenance of intact mitochondrial DNA. Involved in telomere maintenance. This chain is Folylpolyglutamate synthase, found in Saccharomyces cerevisiae (strain RM11-1a) (Baker's yeast).